The sequence spans 201 residues: Putative lipoprotein Hmuk_2215 (201 aa).

An N-terminal signal peptide occupies residues 1–22 (MCPRPRRAVLLGLGVAMSAIAG). Residue Cys23 is modified to N-acetylcysteine. A lipid anchor (S-archaeol cysteine) is attached at Cys23. 2 disordered regions span residues 25–78 (ETAP…ETSE) and 182–201 (ATRAVQQGPEPAEFDDGDCP). Residues 69-78 (TRADETETSE) show a composition bias toward basic and acidic residues.

It localises to the cell membrane. This is Putative lipoprotein Hmuk_2215 from Halomicrobium mukohataei (strain ATCC 700874 / DSM 12286 / JCM 9738 / NCIMB 13541) (Haloarcula mukohataei).